The primary structure comprises 323 residues: uncharacterized protein (323 aa).

Positions 1–142 (MPSVFFSYSH…QVAKAVREAA (142 aa)) constitute a TIR domain.

This is an uncharacterized protein from Sinorhizobium fredii (strain NBRC 101917 / NGR234).